A 134-amino-acid chain; its full sequence is uncharacterized protein (134 aa).

A helical membrane pass occupies residues 13–35 (FFIAFSAYLVVILLMTAVSVYYL).

Its subcellular location is the membrane. This is an uncharacterized protein from Archaeoglobus fulgidus (strain ATCC 49558 / DSM 4304 / JCM 9628 / NBRC 100126 / VC-16).